The primary structure comprises 218 residues: MTDTKIKGILGTKLGMTQVFDENNRVVPVTVVKAGPNVVTQIRTEERDGYSAVQLAFGAIDPRKVNKPTSGQFTKAGVTPRRHVVELRVADTSDYEVGQELTAEVFEDGAYVDVTGTSKGKGFAGTMKRHGFKGQGASHGTQAVHRRPGSIGGCATPGRVFKGMRMSGRMGSDRITTQNLSVHKVDAENGLLLIKGAIPGRKGGLVIVKSAVKGGARA.

Residues 132–152 form a disordered region; that stretch reads FKGQGASHGTQAVHRRPGSIG.

The protein belongs to the universal ribosomal protein uL3 family. In terms of assembly, part of the 50S ribosomal subunit. Forms a cluster with proteins L14 and L19.

One of the primary rRNA binding proteins, it binds directly near the 3'-end of the 23S rRNA, where it nucleates assembly of the 50S subunit. This Rhodococcus erythropolis (strain PR4 / NBRC 100887) protein is Large ribosomal subunit protein uL3.